The following is a 112-amino-acid chain: Thyroid transcription factor 1 (112 aa).

A DNA-binding region (homeobox) is located at residues 1–60 (RRNRRVLFSQAQVYELERRFKQQKYLSAPEREHLASMIHLTPTQVKIWFQNHRYKMKRQA). A disordered region spans residues 59 to 100 (QAKDKAAQQQLQQDSGGGGGGGGAGCPQQQQAQQQSPRRVAV). The segment covering 73–83 (SGGGGGGGGAG) has biased composition (gly residues). Residues 84 to 93 (CPQQQQAQQQ) show a composition bias toward low complexity.

This sequence belongs to the NK-2 homeobox family. Post-translationally, phosphorylated on serine residues.

The protein localises to the nucleus. Its function is as follows. Transcription factor that binds and activates the promoter of thyroid specific genes such as thyroglobulin, thyroperoxidase, and thyrotropin receptor. Crucial in the maintenance of the thyroid differentiation phenotype. May play a role in lung development and surfactant homeostasis. This chain is Thyroid transcription factor 1 (TITF1), found in Cavia porcellus (Guinea pig).